We begin with the raw amino-acid sequence, 158 residues long: MENSENVPSYDQNINFTPNLTRDQEHVIMVSALQQVISNVGGDTNSNAWEADLPPLNAGPCPLCSVTGCYGCVFPRHEAIIKKEKKHKGVRKKPSGKWAAEIWDPSLKVRRWLGTFPTAEMAAKAYNDAAAEFVGRRSARRGTKNGEEASTKKTTEKN.

Residues 86–147 constitute a DNA-binding region (AP2/ERF); it reads KHKGVRKKPS…SARRGTKNGE (62 aa). Residues 134-158 are disordered; it reads VGRRSARRGTKNGEEASTKKTTEKN. Residues 144–158 are compositionally biased toward basic and acidic residues; the sequence is KNGEEASTKKTTEKN.

Belongs to the AP2/ERF transcription factor family. ERF subfamily.

Its subcellular location is the nucleus. Functionally, probably acts as a transcriptional activator. Binds to the GCC-box pathogenesis-related promoter element. May be involved in the regulation of gene expression by stress factors and by components of stress signal transduction pathways. This is Ethylene-responsive transcription factor ERF120 (ERF120) from Arabidopsis thaliana (Mouse-ear cress).